Reading from the N-terminus, the 600-residue chain is Brain-enriched guanylate kinase-associated protein (600 aa).

Met-1 is subject to N-acetylmethionine. Position 137 is a phosphotyrosine (Tyr-137). The interval 192-222 (PGSLSSRMSDASARDLGYRDGVEKSGPRPPY) is disordered. Ser-200 is modified (phosphoserine). The span at 203–217 (SARDLGYRDGVEKSG) shows a compositional bias: basic and acidic residues. Phosphoserine is present on residues Ser-229 and Ser-246. A Phosphothreonine modification is found at Thr-249. Ser-265 carries the post-translational modification Phosphoserine. A disordered region spans residues 298–317 (SSYSSFSATSEEKEHAQAGT). Ser-372 bears the Phosphoserine mark. Arg-380 bears the Asymmetric dimethylarginine mark. Residues Ser-463, Ser-473, Ser-483, Ser-485, Ser-508, Ser-510, and Ser-514 each carry the phosphoserine modification. The segment at 537–590 (GAGSSPEPEHGSRESLEPSSMEASPEMHPPTRLSPQQAFPRTGGSGLSRKDSLT) is disordered. Residues 543-552 (EPEHGSRESL) are compositionally biased toward basic and acidic residues. Phosphoserine occurs at positions 560 and 570.

In terms of assembly, interacts with DLG4 and DLGAP1 and forms a ternary complex.

Its subcellular location is the cytoplasm. It localises to the membrane. May sustain the structure of the postsynaptic density (PSD). The sequence is that of Brain-enriched guanylate kinase-associated protein (Begain) from Mus musculus (Mouse).